We begin with the raw amino-acid sequence, 279 residues long: MAGRVEGKVAFITGAARGQGRSHAVRLAEEGADIIAVDVCRRISSNEDIPASTPEDLAETVELVKGLNRRIVAEEVDVRDYDALKAVVDSGVEQLGGLDIVVANAGIGNGGATLDKTSEADWDDMIGVNLSGVWKTVKAAVPHLISGGNGGSIILTSSVGGLKAYPHTGHYIAAKHGVVGLMRTFAVELGQHSIRVNSVHPTNVNTPLFMNEGTMKLFRPDLENPGPDDMAVVAQMMHVLPVGWVEPRDISNAVLFLASDEARYVTGLPMTVDAGSMLK.

11-33 (FITGAARGQGRSHAVRLAEEGAD) serves as a coordination point for NAD(+). Residue Lys65 forms an Isoglutamyl lysine isopeptide (Lys-Gln) (interchain with Q-Cter in protein Pup) linkage. Ser158 contacts substrate. The active-site Proton acceptor is the Tyr171.

It belongs to the short-chain dehydrogenases/reductases (SDR) family.

The sequence is that of Putative short-chain type dehydrogenase/reductase MSMEG_6031/MSMEI_5872 from Mycolicibacterium smegmatis (strain ATCC 700084 / mc(2)155) (Mycobacterium smegmatis).